A 376-amino-acid polypeptide reads, in one-letter code: Queuine tRNA-ribosyltransferase (376 aa).

Asp89 acts as the Proton acceptor in catalysis. Substrate-binding positions include 89–93, Asp143, Gln194, and Gly221; that span reads DSGGF. The segment at 252–258 is RNA binding; that stretch reads GVGIPSN. The active-site Nucleophile is the Asp271. Positions 276 to 280 are RNA binding; important for wobble base 34 recognition; the sequence is ARNGR. The Zn(2+) site is built by Cys309, Cys311, Cys314, and His340.

The protein belongs to the queuine tRNA-ribosyltransferase family. Homodimer. Within each dimer, one monomer is responsible for RNA recognition and catalysis, while the other monomer binds to the replacement base PreQ1. Zn(2+) serves as cofactor.

The catalysed reaction is 7-aminomethyl-7-carbaguanine + guanosine(34) in tRNA = 7-aminomethyl-7-carbaguanosine(34) in tRNA + guanine. Its pathway is tRNA modification; tRNA-queuosine biosynthesis. Its function is as follows. Catalyzes the base-exchange of a guanine (G) residue with the queuine precursor 7-aminomethyl-7-deazaguanine (PreQ1) at position 34 (anticodon wobble position) in tRNAs with GU(N) anticodons (tRNA-Asp, -Asn, -His and -Tyr). Catalysis occurs through a double-displacement mechanism. The nucleophile active site attacks the C1' of nucleotide 34 to detach the guanine base from the RNA, forming a covalent enzyme-RNA intermediate. The proton acceptor active site deprotonates the incoming PreQ1, allowing a nucleophilic attack on the C1' of the ribose to form the product. After dissociation, two additional enzymatic reactions on the tRNA convert PreQ1 to queuine (Q), resulting in the hypermodified nucleoside queuosine (7-(((4,5-cis-dihydroxy-2-cyclopenten-1-yl)amino)methyl)-7-deazaguanosine). The polypeptide is Queuine tRNA-ribosyltransferase (Clostridium botulinum (strain Hall / ATCC 3502 / NCTC 13319 / Type A)).